We begin with the raw amino-acid sequence, 479 residues long: tRNA-2-methylthio-N(6)-dimethylallyladenosine synthase (479 aa).

The MTTase N-terminal domain maps to 3 to 120; the sequence is KKLYIKTWGC…LPEMVNQVSE (118 aa). The [4Fe-4S] cluster site is built by Cys-12, Cys-49, Cys-83, Cys-157, Cys-161, and Cys-164. In terms of domain architecture, Radical SAM core spans 143-375; that stretch reads KADGASAFVS…QQRLNQQSMA (233 aa). Residues 378 to 441 enclose the TRAM domain; that stretch reads RRMLETEQRI…PNSLRGELIR (64 aa).

Belongs to the methylthiotransferase family. MiaB subfamily. Monomer. [4Fe-4S] cluster is required as a cofactor.

The protein resides in the cytoplasm. It catalyses the reaction N(6)-dimethylallyladenosine(37) in tRNA + (sulfur carrier)-SH + AH2 + 2 S-adenosyl-L-methionine = 2-methylsulfanyl-N(6)-dimethylallyladenosine(37) in tRNA + (sulfur carrier)-H + 5'-deoxyadenosine + L-methionine + A + S-adenosyl-L-homocysteine + 2 H(+). Its function is as follows. Catalyzes the methylthiolation of N6-(dimethylallyl)adenosine (i(6)A), leading to the formation of 2-methylthio-N6-(dimethylallyl)adenosine (ms(2)i(6)A) at position 37 in tRNAs that read codons beginning with uridine. This is tRNA-2-methylthio-N(6)-dimethylallyladenosine synthase from Idiomarina loihiensis (strain ATCC BAA-735 / DSM 15497 / L2-TR).